A 428-amino-acid chain; its full sequence is Adenylosuccinate synthetase (428 aa).

GTP-binding positions include 12 to 18 (GDEGKGK) and 40 to 42 (GHT). Catalysis depends on aspartate 13, which acts as the Proton acceptor. Mg(2+)-binding residues include aspartate 13 and glycine 40. Residues 13 to 16 (DEGK), 38 to 41 (NAGH), threonine 128, arginine 142, glutamine 223, threonine 238, and arginine 302 each bind IMP. Histidine 41 serves as the catalytic Proton donor. 298-304 (TTTGRPR) contributes to the substrate binding site. GTP contacts are provided by residues arginine 304, 330–332 (SID), and 412–414 (SVG).

The protein belongs to the adenylosuccinate synthetase family. In terms of assembly, homodimer. Mg(2+) serves as cofactor.

The protein resides in the cytoplasm. It carries out the reaction IMP + L-aspartate + GTP = N(6)-(1,2-dicarboxyethyl)-AMP + GDP + phosphate + 2 H(+). Its pathway is purine metabolism; AMP biosynthesis via de novo pathway; AMP from IMP: step 1/2. Functionally, plays an important role in the de novo pathway of purine nucleotide biosynthesis. Catalyzes the first committed step in the biosynthesis of AMP from IMP. This chain is Adenylosuccinate synthetase, found in Shouchella clausii (strain KSM-K16) (Alkalihalobacillus clausii).